The primary structure comprises 336 residues: Protein phosphatase 1 regulatory subunit pprA (336 aa).

The segment covering 1–10 (MSEQNTIINS) has biased composition (low complexity). Positions 1 to 24 (MSEQNTIINSEEIKENEKIESETE) are disordered. A compositionally biased stretch (basic and acidic residues) spans 11–21 (EEIKENEKIES). LRR repeat units follow at residues 26 to 47 (PITY…YNIP), 49 to 70 (TLLD…NHLK), 71 to 92 (NLKK…DQLK), 93 to 114 (ELES…KDFQ), 115 to 136 (SLTY…SIKD), 139 to 160 (KIKE…QELV), 161 to 182 (PIKN…ENLV), 183 to 204 (NIET…NHLS), 205 to 225 (HLRI…KGLV), 229 to 250 (CLEE…QSLK), 251 to 272 (QLRT…NELP), and 273 to 294 (DLDE…EQQV). An LRRCT domain is found at 306–336 (NPVATHVQYRRMFINMFPQLKQLDATMVKRN).

Belongs to the SDS22 family.

The protein localises to the nucleus. In terms of biological role, regulatory subunit of protein phosphatase 1. In Dictyostelium discoideum (Social amoeba), this protein is Protein phosphatase 1 regulatory subunit pprA (pprA).